Here is a 144-residue protein sequence, read N- to C-terminus: Large ribosomal subunit protein uL15 (144 aa).

The tract at residues 1 to 57 (MKLNDLSPAPGSRREKHRPGRGIGSGLGKTGGRGHKGQTSRSGGSIAPGFEGGQQPL) is disordered. A compositionally biased stretch (gly residues) spans 21-31 (RGIGSGLGKTG).

This sequence belongs to the universal ribosomal protein uL15 family. In terms of assembly, part of the 50S ribosomal subunit.

Functionally, binds to the 23S rRNA. This is Large ribosomal subunit protein uL15 from Pseudomonas putida (strain ATCC 700007 / DSM 6899 / JCM 31910 / BCRC 17059 / LMG 24140 / F1).